Reading from the N-terminus, the 605-residue chain is MRTHYCGDVRLRDVGTTVTLYGWVDRRRDHGGVIFIDLRDRSGIVQIVSDPQRTPDAYPQAERLRSEYVVKVVGRVSKRPADSVNPKLATGDIEIYADGIEVLNTVRQQLPFAISSTENEEVREEVRLRYRYLDLRRERMARNLRLRHRVVQAMRRFLEDEAGFIEVETPILTRSTPEGARDYLVPSRVNPGEWFALPQSPQLFKQLLMVAGCDRYYQIAHCFRDEDLRADRQPEFTQLDMEMSFMDQEEILDLNEALICHIFKTVKGIELPRPFPRLSYQEAMDRYGTDKPDTRYGLELVDVSDILKDSGFKVFSGAIAQGGVVKILPIPNGSDRISNVRIKPGGDLFQEATTAGAKGLAYIRVRNNGEIDTIGAIKDNLSPEQKALLLERTGAQPGHLLLFGAGETATVNKTLDRLRQTIAREFNLIDPTATHLLWVVDFPMFEWNAEEKRLEALHHPFTAPHPEDLGDLKTARAQAYDLIFNGHEVGGGSLRIHQPELQRQVFEIIGIDEATAQEKFGFLLEAFEFGTPPHGGIAYGLDRLVMLLAGADSIRDTIAFPKTQQARCLLTGAPSSVEPQQLKELHVTPAKPAKTTAKTKPRPAD.

An L-aspartate-binding site is contributed by E178. The tract at residues 202-205 (QLFK) is aspartate. R224 contributes to the L-aspartate binding site. ATP-binding positions include 224 to 226 (RDE) and Q233. H458 serves as a coordination point for L-aspartate. E488 provides a ligand contact to ATP. Residue R495 participates in L-aspartate binding. Residue 540-543 (GLDR) coordinates ATP. The tract at residues 580-605 (QQLKELHVTPAKPAKTTAKTKPRPAD) is disordered.

This sequence belongs to the class-II aminoacyl-tRNA synthetase family. Type 1 subfamily. In terms of assembly, homodimer.

It localises to the cytoplasm. It catalyses the reaction tRNA(Asx) + L-aspartate + ATP = L-aspartyl-tRNA(Asx) + AMP + diphosphate. Aspartyl-tRNA synthetase with relaxed tRNA specificity since it is able to aspartylate not only its cognate tRNA(Asp) but also tRNA(Asn). Reaction proceeds in two steps: L-aspartate is first activated by ATP to form Asp-AMP and then transferred to the acceptor end of tRNA(Asp/Asn). The sequence is that of Aspartate--tRNA(Asp/Asn) ligase from Thermosynechococcus vestitus (strain NIES-2133 / IAM M-273 / BP-1).